The chain runs to 358 residues: CRS2-associated factor 2, mitochondrial (358 aa).

The N-terminal 28 residues, 1–28, are a transit peptide targeting the mitochondrion; sequence MLSIRRSLTLAKEPKDLFLFLCNLRARC. The segment at 35-64 is disordered; the sequence is DPPFSPLSKPTKPPKEKKKQKTKKQDQSSE. CRM domains lie at 141 to 239 and 261 to 357; these read ETLT…SRPI and DGLE…ELVT.

Part of large ribonucleo-protein complexes that include group IIB introns.

Its subcellular location is the mitochondrion. May be involved in the splicing of group IIB introns in mitochondria. This is CRS2-associated factor 2, mitochondrial from Arabidopsis thaliana (Mouse-ear cress).